The following is a 272-amino-acid chain: Cerberus (272 aa).

A signal peptide spans 1 to 17 (MHLLLVQLLVLLPLGKA). Disulfide bonds link cysteine 162–cysteine 209, cysteine 176–cysteine 223, cysteine 186–cysteine 239, and cysteine 190–cysteine 241. In terms of domain architecture, CTCK spans 162–246 (CRTVPFNQTI…EECQCMVKTE (85 aa)). N-linked (GlcNAc...) asparagine glycans are attached at residues asparagine 168 and asparagine 222.

It belongs to the DAN family. In terms of assembly, forms monomers and predominantly dimers. N-glycosylated.

It is found in the secreted. Its function is as follows. Cytokine that may play a role in anterior neural induction and somite formation during embryogenesis in part, through a BMP-inhibitory mechanism. Can regulate Nodal signaling during gastrulation as well as the formation and patterning of the primitive streak. This chain is Cerberus (Cer1), found in Mus musculus (Mouse).